The primary structure comprises 133 residues: Small ribosomal subunit protein uS8 (133 aa).

This sequence belongs to the universal ribosomal protein uS8 family. In terms of assembly, part of the 30S ribosomal subunit. Contacts proteins S5 and S12.

Its function is as follows. One of the primary rRNA binding proteins, it binds directly to 16S rRNA central domain where it helps coordinate assembly of the platform of the 30S subunit. The chain is Small ribosomal subunit protein uS8 from Prochlorococcus marinus (strain SARG / CCMP1375 / SS120).